The following is a 43-amino-acid chain: Truncated K3L homolog (43 aa).

This sequence belongs to the orthopoxvirus OPG041 family.

This Cynomys gunnisoni (Gunnison's prairie dog) protein is Truncated K3L homolog (OPG041).